Here is a 786-residue protein sequence, read N- to C-terminus: Leucine-rich repeat extensin-like protein 2 (786 aa).

The signal sequence occupies residues methionine 1–glycine 28. Asparagine 73 and asparagine 79 each carry an N-linked (GlcNAc...) asparagine glycan. 9 LRR repeats span residues threonine 100 to leucine 124, threonine 125 to histidine 147, lysine 149 to leucine 172, proline 173 to lysine 196, leucine 198 to serine 219, valine 221 to glycine 243, lysine 244 to leucine 267, lysine 268 to methionine 291, and lysine 292 to leucine 315. Asparagine 255 and asparagine 269 each carry an N-linked (GlcNAc...) asparagine glycan. 2 N-linked (GlcNAc...) asparagine glycosylation sites follow: asparagine 320 and asparagine 346. Disordered stretches follow at residues isoleucine 352–valine 372, phenylalanine 390–valine 589, proline 624–proline 645, and proline 694–tyrosine 786. Positions aspartate 353–lysine 362 are enriched in basic and acidic residues. The segment at serine 384–tyrosine 786 is contains the Ser-Pro(4) repeats. Pro residues-rich tracts occupy residues tyrosine 460 to serine 477, tyrosine 487 to lysine 542, and serine 566 to valine 589. Pro residues-rich tracts occupy residues proline 694–threonine 713, proline 720–lysine 737, proline 752–proline 769, and serine 777–tyrosine 786.

In terms of processing, hydroxylated on proline residues in the S-P-P-P-P repeat. Post-translationally, O-glycosylated on hydroxyprolines. In terms of tissue distribution, mostly expressed in roots, also present in stems at low levels. In roots, confined to differentiation zones, the collet, and meristematic cells of tips.

It localises to the secreted. It is found in the cell wall. Functionally, modulates cell morphogenesis by regulating cell wall formation and assembly, and/or growth polarization. Together with LRX2, component of the extracellular mechanism regulating root hair morphogenesis and elongation. This chain is Leucine-rich repeat extensin-like protein 2 (LRX2), found in Arabidopsis thaliana (Mouse-ear cress).